A 357-amino-acid chain; its full sequence is Anthranilate phosphoribosyltransferase (357 aa).

5-phospho-alpha-D-ribose 1-diphosphate is bound by residues G91, 94–95 (GD), T99, 101–104 (NIST), 119–127 (KHGNRSVSS), and S131. G91 contacts anthranilate. Position 103 (S103) interacts with Mg(2+). N122 serves as a coordination point for anthranilate. R177 serves as a coordination point for anthranilate. Residues D235 and E236 each contribute to the Mg(2+) site.

Belongs to the anthranilate phosphoribosyltransferase family. As to quaternary structure, homodimer. Mg(2+) serves as cofactor.

The catalysed reaction is N-(5-phospho-beta-D-ribosyl)anthranilate + diphosphate = 5-phospho-alpha-D-ribose 1-diphosphate + anthranilate. The protein operates within amino-acid biosynthesis; L-tryptophan biosynthesis; L-tryptophan from chorismate: step 2/5. Functionally, catalyzes the transfer of the phosphoribosyl group of 5-phosphorylribose-1-pyrophosphate (PRPP) to anthranilate to yield N-(5'-phosphoribosyl)-anthranilate (PRA). The sequence is that of Anthranilate phosphoribosyltransferase from Shewanella baltica (strain OS155 / ATCC BAA-1091).